We begin with the raw amino-acid sequence, 137 residues long: Cofilin (137 aa).

The region spanning 5–135 (GVKVSPECLE…AYETVLEKVT (131 aa)) is the ADF-H domain.

It belongs to the actin-binding proteins ADF family.

It is found in the cytoplasm. It localises to the cytoskeleton. The protein localises to the nucleus matrix. Controls reversibly actin polymerization and depolymerization in a pH-sensitive manner. It has the ability to bind G- and F-actin in a 1:1 ratio of cofilin to actin. Binding to F-actin is regulated by tropomyosin. It is the major component of intranuclear and cytoplasmic actin rods. Required for accumulation of actin at the cell division site via depolymerizing actin at the cell ends. In association with myosin II has a role in the assembly of the contractile ring via severing actin filaments. Involved in the maintenance of the contractile ring once formed. In association with profilin and capping protein, has a role in the mitotic reorganization of the actin cytoskeleton. Severs actin filaments (F-actin). This chain is Cofilin (cof1), found in Schizosaccharomyces pombe (strain 972 / ATCC 24843) (Fission yeast).